A 589-amino-acid polypeptide reads, in one-letter code: Guanylate-binding protein 1 (589 aa).

A GTPase domain (Globular) region spans residues 1–309 (MASEIHMSEP…SAICSGELPC (309 aa)). Positions 35 to 276 (TQPVVVVAIV…FTSYIFSYSG (242 aa)) constitute a GB1/RHD3-type G domain. GTP-binding positions include 47-53 (YRTGKSY), 67-69 (LGS), and 97-101 (DTEGL). Residue S156 is modified to Phosphoserine. C586 carries the cysteine methyl ester modification. C586 is lipidated: S-farnesyl cysteine. C586 carries S-geranylgeranyl cysteine; partial lipidation. At T587 the chain carries Phosphothreonine. Positions 587 to 589 (TIL) are cleaved as a propeptide — removed in mature form.

It belongs to the TRAFAC class dynamin-like GTPase superfamily. GB1/RHD3 GTPase family. GB1 subfamily. As to quaternary structure, homodimer; homodimerization occurs upon GTP-binding and is required for the second hydrolysis step from GDP to GMP. Undergoes conformational changes and oligomerization upon GTP-binding and hydrolysis. Heterodimer with other family members, including GBP2, GBP3, GBP4 and GBP5. Dimerization regulates subcellular location to membranous structures. Interacts with SQSTM1. Interacts (when phosphorylated) with 14-3-3 protein sigma (SFN); leading to GBP1 retention in the cytosol and inactivation. Post-translationally, isoprenylation of mouse GBP1 is incomplete. It persistently exists in the cell as a mixture of C20-modified and (more predominantly) unmodified form. Isoprenylation is required for proper subcellular location. Phosphorylated at Ser-156 by PIM1 in absence of infection, inhibits GBP1: phosphorylation promotes interaction with 14-3-3 protein sigma (SFN), leading to GBP1 retention in the cytosol. Dephosphorylated in response to infection, liberating GBP1.

Its subcellular location is the cytoplasmic vesicle membrane. The protein localises to the golgi apparatus membrane. It localises to the cell membrane. It is found in the cytoplasm. The protein resides in the cytosol. Its subcellular location is the secreted. The catalysed reaction is GTP + H2O = GDP + phosphate + H(+). The enzyme catalyses GDP + H2O = GMP + phosphate + H(+). In terms of biological role, interferon (IFN)-inducible GTPase that plays important roles in innate immunity against a diverse range of bacterial, viral and protozoan pathogens. Hydrolyzes GTP to GMP in two consecutive cleavage reactions: GTP is first hydrolyzed to GDP and then to GMP in a processive manner. Following infection, recruited to the pathogen-containing vacuoles or vacuole-escaped bacteria and promotes both inflammasome assembly and autophagy. Acts as a positive regulator of inflammasome assembly by facilitating the detection of inflammasome ligands from pathogens. Involved in the lysis of pathogen-containing vacuoles, releasing pathogens into the cytosol. Following pathogen release in the cytosol, forms a protein coat in a GTPase-dependent manner that encapsulates pathogens and promotes the detection of ligands by pattern recognition receptors. Plays a key role in inflammasome assembly in response to infection by Gram-negative bacteria: following pathogen release in the cytosol, forms a protein coat that encapsulates Gram-negative bacteria and directly binds to lipopolysaccharide (LPS), disrupting the O-antigen barrier and unmasking lipid A that is that detected by the non-canonical inflammasome effector CASP4/CASP11. Also promotes recruitment of proteins that mediate bacterial cytolysis, leading to release double-stranded DNA (dsDNA) that activates the AIM2 inflammasome. Involved in autophagy by regulating bacteriolytic peptide generation via its interaction with ubiquitin-binding protein SQSTM1, which delivers monoubiquitinated proteins to autolysosomes for the generation of bacteriolytic peptides. Confers protection to several pathogens, including the bacterial pathogens L.monocytogenes and M.bovis BCG as well as the protozoan pathogen T.gondii. Exhibits antiviral activity against influenza virus. The chain is Guanylate-binding protein 1 (Gbp1) from Mus musculus (Mouse).